An 802-amino-acid polypeptide reads, in one-letter code: Putative flavin carrier protein 3 (802 aa).

An N-terminal signal peptide occupies residues 1–28; the sequence is MRFLQVYKSSALIGLIILLASKVNLAEA. The Lumenal portion of the chain corresponds to 29–169; that stretch reads KRKLVATSLV…YFSNGKTVSQ (141 aa). An N-linked (GlcNAc...) asparagine glycan is attached at Asn149. Residues 170–190 traverse the membrane as a helical segment; the sequence is IGVKWATAVVAGIGLLLSAIL. Residues 191–200 lie on the Cytoplasmic side of the membrane; sequence STFGNSTAAS. The helical transmembrane segment at 201-221 threads the bilayer; sequence HISANTMSLFLYFQSVVVVAM. Residues 222–229 lie on the Lumenal side of the membrane; that stretch reads QHVHRVPP. Residues 230–250 form a helical membrane-spanning segment; sequence IAAAWAENLVWSMGLIRISFM. Over 251–255 the chain is Cytoplasmic; it reads QRIFR. A helical membrane pass occupies residues 256–278; sequence WYVQSTGGTPSLYLTSTSMSVLA. Residues 279–323 are Lumenal-facing; the sequence is QRSWQYLMELPLIKRATNVLYGNANTLIFRGIKRLGYKMGIENTS. An N-linked (GlcNAc...) asparagine glycan is attached at Asn321. Residues 324-344 form a helical membrane-spanning segment; the sequence is IVCTGFTFFVLCGYVLAGFII. The Cytoplasmic segment spans residues 345–377; it reads VFKCCVELATRLGWIQKARFWEFRKQWRMILKG. A helical membrane pass occupies residues 378-398; that stretch reads ALLRYIYIGFVQLTILSFWEF. Over 399–405 the chain is Lumenal; the sequence is TERDSPA. The chain crosses the membrane as a helical span at residues 406–426; the sequence is VIVIACLFILLSCGLMLWAAW. The Cytoplasmic segment spans residues 427–467; it reads RTVFFARRSVALYNNPAALLYGDEYVLHKYGFFYTMFNANH. The chain crosses the membrane as a helical span at residues 468-488; sequence YWWNIVLLSYIFVKSLLVGFA. Residues 489–495 are Lumenal-facing; that stretch reads QASGQTQ. A helical membrane pass occupies residues 496–516; sequence VLFMFILDLFYFVAIIYYKPY. Over 517–525 the chain is Cytoplasmic; the sequence is LDRPTNIMN. A helical transmembrane segment spans residues 526-546; it reads ILIATVTVVNSFLFMFFSDLF. Asn547 carries N-linked (GlcNAc...) asparagine glycosylation. At 547–557 the chain is on the lumenal side; it reads NQSYKVAAIMG. The chain crosses the membrane as a helical span at residues 558 to 578; sequence WIFFIMNAAFSFILLMMILAF. The Cytoplasmic portion of the chain corresponds to 579–802; it reads AGMMLFSKNP…PPGFFDEGFM (224 aa). Ser616 and Ser635 each carry phosphoserine. The tract at residues 629–802 is disordered; that stretch reads KDHDDNSDYE…PPGFFDEGFM (174 aa). Composition is skewed to polar residues over residues 653-663, 697-717, and 761-788; these read DETTPTTVTSS, KQQT…STLG, and DTSS…NNKQ. A phosphoserine mark is found at Ser779 and Ser782.

Belongs to the transient receptor potential (TRP) ion channel family.

Its subcellular location is the endoplasmic reticulum membrane. Its function is as follows. May be responsible for the transport of FAD into the endoplasmic reticulum lumen, where it is required for oxidative protein folding. The chain is Putative flavin carrier protein 3 (FLC3) from Saccharomyces cerevisiae (strain ATCC 204508 / S288c) (Baker's yeast).